We begin with the raw amino-acid sequence, 439 residues long: D-inositol 3-phosphate glycosyltransferase (439 aa).

His21 contacts 1D-myo-inositol 3-phosphate. Residues 27 to 28 and Gly35 contribute to the UDP-N-acetyl-alpha-D-glucosamine site; that span reads QP. 1D-myo-inositol 3-phosphate-binding positions include 32-37, Lys90, Tyr123, Thr147, and Arg167; that span reads DAGGMN. Arg241, Lys246, and Gln299 together coordinate UDP-N-acetyl-alpha-D-glucosamine. Mg(2+) is bound by residues Tyr308, Arg309, and Ala311. Residues Glu321 and Glu329 each contribute to the UDP-N-acetyl-alpha-D-glucosamine site. Residue Thr335 participates in Mg(2+) binding.

The protein belongs to the glycosyltransferase group 1 family. MshA subfamily. In terms of assembly, homodimer.

The catalysed reaction is 1D-myo-inositol 3-phosphate + UDP-N-acetyl-alpha-D-glucosamine = 1D-myo-inositol 2-acetamido-2-deoxy-alpha-D-glucopyranoside 3-phosphate + UDP + H(+). Functionally, catalyzes the transfer of a N-acetyl-glucosamine moiety to 1D-myo-inositol 3-phosphate to produce 1D-myo-inositol 2-acetamido-2-deoxy-glucopyranoside 3-phosphate in the mycothiol biosynthesis pathway. The sequence is that of D-inositol 3-phosphate glycosyltransferase from Mycobacterium sp. (strain KMS).